The sequence spans 281 residues: ATP phosphoribosyltransferase (281 aa).

Belongs to the ATP phosphoribosyltransferase family. Long subfamily. Mg(2+) is required as a cofactor.

The protein localises to the cytoplasm. It catalyses the reaction 1-(5-phospho-beta-D-ribosyl)-ATP + diphosphate = 5-phospho-alpha-D-ribose 1-diphosphate + ATP. It participates in amino-acid biosynthesis; L-histidine biosynthesis; L-histidine from 5-phospho-alpha-D-ribose 1-diphosphate: step 1/9. Feedback inhibited by histidine. Functionally, catalyzes the condensation of ATP and 5-phosphoribose 1-diphosphate to form N'-(5'-phosphoribosyl)-ATP (PR-ATP). Has a crucial role in the pathway because the rate of histidine biosynthesis seems to be controlled primarily by regulation of HisG enzymatic activity. This is ATP phosphoribosyltransferase (hisG) from Archaeoglobus fulgidus (strain ATCC 49558 / DSM 4304 / JCM 9628 / NBRC 100126 / VC-16).